A 518-amino-acid chain; its full sequence is Ent-cassadiene hydroxylase (518 aa).

A helical membrane pass occupies residues 6 to 26; the sequence is LILALGLSVLFVLLSKLVSSA. Residue Cys-451 coordinates heme.

This sequence belongs to the cytochrome P450 family. Heme is required as a cofactor.

The protein resides in the membrane. It carries out the reaction ent-cassa-12,15-diene + 3 reduced [NADPH--hemoprotein reductase] + 3 O2 = ent-3beta-hydroxycassa-12,15-dien-2-one + 3 oxidized [NADPH--hemoprotein reductase] + 4 H2O + 3 H(+). Enzyme of the diterpenoid metabolism involved in the biosynthesis of antibacterial oryzalides such as phytocassane. Catalyzes the hydroxylation of ent-cassa-12,15-diene to form ent-3beta-hydroxycassa-12,15-dien-2-one. The chain is Ent-cassadiene hydroxylase (CYP71Z7) from Oryza sativa subsp. japonica (Rice).